We begin with the raw amino-acid sequence, 450 residues long: L-galactonate dehydratase (450 aa).

The active site involves lysine 221. Aspartate 251, glutamate 277, and glutamate 306 together coordinate Mg(2+). Histidine 356 is an active-site residue.

This sequence belongs to the mandelate racemase/muconate lactonizing enzyme family. The cofactor is Mg(2+).

It carries out the reaction L-galactonate = 2-dehydro-3-deoxy-L-galactonate + H2O. Its pathway is carbohydrate acid metabolism. In terms of biological role, mediates the conversion of L-galactonate to 2-dehydro-3-deoxy-L-galactonate, the second step in D-galacturonate catabolic process. The protein is L-galactonate dehydratase (lgd1) of Hypocrea jecorina (Trichoderma reesei).